Consider the following 126-residue polypeptide: uncharacterized protein (126 aa).

An HTH hxlR-type domain is found at 8-106 (ISVEATLEVI…WGANHINRVY (99 aa)).

This is an uncharacterized protein from Bacillus subtilis (strain 168).